Reading from the N-terminus, the 553-residue chain is MNNLSLKAWRSTVSCGPNLRQCVPRISGAGSRRAQCRESSTGVATCPHLADSEEASAPRIHSTSEWQNALPYNQIPGPKPIPILGNTWRLMPIIGQYTISDVAKISSLLHDRYGRIVRFGGLIGRPDLLFIYDADEIEKCYRSEGPTPFRPSMPSLVKYKSVVRKDFFGDLGGVVGVHGEPWREFRSRVQKPVLQLSTIRRYLQPLEVITEDFLVRCENLLDENQELPEDFDNEIHKWSLECIGRVALDTRLGCLESNLKPDSEPQQIIDAAKYALRNVATLELKAPYWRYFPTPLWTRYVKNMNFFVGVCMKYIQSATERLKTQDPSLRAGEPSLVEKVILSQKDEKIATIMALDLILVGIDTISMAVCSMLYQLATRPVDQQKVHEELKRLLPDPNTPLTIPLLDQMHHLKGFIKEVFRMYSTVIGNGRTLMEDSVICGYQVPKGVQAVFPTIVTGNMEEYVTDAATFRPERWLKPQHGGTPGKLHPFASLPYGYGARMCLGRRFADLEMQILLAKLLRNYKLEYNHKPLDYAVTFMYAPDGPLRFKMTRV.

Cysteine 502 serves as a coordination point for heme.

It belongs to the cytochrome P450 family. It depends on heme as a cofactor.

Its subcellular location is the mitochondrion membrane. The protein is Probable cytochrome P450 301a1, mitochondrial (Cyp301a1) of Drosophila melanogaster (Fruit fly).